Reading from the N-terminus, the 374-residue chain is Erythronate-4-phosphate dehydrogenase (374 aa).

The substrate site is built by Ser53 and Thr75. Residue Asp160 coordinates NAD(+). Arg222 is a catalytic residue. Asp246 contacts NAD(+). Residue Glu251 is part of the active site. Catalysis depends on His268, which acts as the Proton donor. Gly271 contacts NAD(+). Tyr272 lines the substrate pocket.

It belongs to the D-isomer specific 2-hydroxyacid dehydrogenase family. PdxB subfamily. Homodimer.

It localises to the cytoplasm. The catalysed reaction is 4-phospho-D-erythronate + NAD(+) = (R)-3-hydroxy-2-oxo-4-phosphooxybutanoate + NADH + H(+). It functions in the pathway cofactor biosynthesis; pyridoxine 5'-phosphate biosynthesis; pyridoxine 5'-phosphate from D-erythrose 4-phosphate: step 2/5. In terms of biological role, catalyzes the oxidation of erythronate-4-phosphate to 3-hydroxy-2-oxo-4-phosphonooxybutanoate. The protein is Erythronate-4-phosphate dehydrogenase of Psychrobacter sp. (strain PRwf-1).